Reading from the N-terminus, the 447-residue chain is Argininosuccinate synthase (447 aa).

ATP-binding positions include Ala17–Ser25 and Ala43. Tyr99 lines the L-citrulline pocket. ATP contacts are provided by Gly129 and Thr131. Positions 131, 135, and 136 each coordinate L-aspartate. Residue Asn135 coordinates L-citrulline. Asp136 contacts ATP. L-citrulline-binding residues include Arg139 and Ser192. Asp194 serves as a coordination point for ATP. L-citrulline is bound by residues Thr201, Glu203, and Glu280.

Belongs to the argininosuccinate synthase family. Type 2 subfamily. In terms of assembly, homotetramer.

It localises to the cytoplasm. It carries out the reaction L-citrulline + L-aspartate + ATP = 2-(N(omega)-L-arginino)succinate + AMP + diphosphate + H(+). It participates in amino-acid biosynthesis; L-arginine biosynthesis; L-arginine from L-ornithine and carbamoyl phosphate: step 2/3. The polypeptide is Argininosuccinate synthase (Escherichia coli O8 (strain IAI1)).